Here is a 1064-residue protein sequence, read N- to C-terminus: Carbamoyl phosphate synthase pyrimidine-specific large chain (1064 aa).

The segment at 1-401 is carboxyphosphate synthetic domain; sequence MPKRRDIETI…SLLKAVRSLE (401 aa). ATP-binding residues include Arg-129, Arg-169, Gly-175, Gly-176, Arg-208, Ile-210, Gly-241, Ile-242, His-243, Gln-284, and Glu-298. An ATP-grasp 1 domain is found at 133–327; the sequence is RALMNELGEP…IAKLAAKIAV (195 aa). Mg(2+) contacts are provided by Gln-284, Glu-298, and Asn-300. Positions 284, 298, and 300 each coordinate Mn(2+). The tract at residues 402-546 is oligomerization domain; the sequence is IGVHHLELNE…YSTYEEENES (145 aa). The segment at 547–929 is carbamoyl phosphate synthetic domain; sequence IVTEKPSVIV…ALYKGLVASG (383 aa). One can recognise an ATP-grasp 2 domain in the interval 671–861; the sequence is EQALSELGIP…MANLATKAIL (191 aa). The ATP site is built by Arg-707, Arg-746, Ile-748, Glu-752, Gly-777, Val-778, His-779, Ser-780, Gln-820, and Glu-832. Positions 820, 832, and 834 each coordinate Mg(2+). Mn(2+)-binding residues include Gln-820, Glu-832, and Asn-834. Positions 930 to 1064 constitute an MGS-like domain; that stretch reads IQIQPHGAVL…TAMTEGLVRS (135 aa). The allosteric domain stretch occupies residues 930 to 1064; the sequence is IQIQPHGAVL…TAMTEGLVRS (135 aa).

This sequence belongs to the CarB family. In terms of assembly, composed of two chains; the small (or glutamine) chain promotes the hydrolysis of glutamine to ammonia, which is used by the large (or ammonia) chain to synthesize carbamoyl phosphate. Tetramer of heterodimers (alpha,beta)4. Mg(2+) serves as cofactor. The cofactor is Mn(2+).

The enzyme catalyses hydrogencarbonate + L-glutamine + 2 ATP + H2O = carbamoyl phosphate + L-glutamate + 2 ADP + phosphate + 2 H(+). It catalyses the reaction hydrogencarbonate + NH4(+) + 2 ATP = carbamoyl phosphate + 2 ADP + phosphate + 2 H(+). It participates in amino-acid biosynthesis; L-arginine biosynthesis; carbamoyl phosphate from bicarbonate: step 1/1. It functions in the pathway pyrimidine metabolism; UMP biosynthesis via de novo pathway; (S)-dihydroorotate from bicarbonate: step 1/3. Its function is as follows. Small subunit of the glutamine-dependent carbamoyl phosphate synthetase (CPSase). CPSase catalyzes the formation of carbamoyl phosphate from the ammonia moiety of glutamine, carbonate, and phosphate donated by ATP, constituting the first step of the biosynthetic pathway leading to pyrimidine nucleotides. The large subunit (synthetase) binds the substrates ammonia (free or transferred from glutamine from the small subunit), hydrogencarbonate and ATP and carries out an ATP-coupled ligase reaction, activating hydrogencarbonate by forming carboxy phosphate which reacts with ammonia to form carbamoyl phosphate. This Geobacillus stearothermophilus (Bacillus stearothermophilus) protein is Carbamoyl phosphate synthase pyrimidine-specific large chain (pyrAB).